Reading from the N-terminus, the 509-residue chain is Nucleolar GTP-binding protein 2 (509 aa).

Over residues 1-14 the composition is skewed to basic and acidic residues; that stretch reads MGTGKKEATRRAKG. Residues 1-22 form a disordered region; sequence MGTGKKEATRRAKGGETGNGFG. The region spanning 204 to 365 is the CP-type G domain; that stretch reads WNELYKVIDS…LIDCPGIVPP (162 aa). GTP contacts are provided by residues 314-321 and 358-362; these read GYPNTGKS and DCPGI. A disordered region spans residues 480 to 509; it reads EMKKREIHEAPAATETAEETKEEEFKGFDD.

The protein belongs to the TRAFAC class YlqF/YawG GTPase family. NOG2 subfamily.

It localises to the nucleus. Its subcellular location is the nucleolus. Its function is as follows. GTPase that associates with pre-60S ribosomal subunits in the nucleolus and is required for their nuclear export and maturation. This chain is Nucleolar GTP-binding protein 2 (NOG2), found in Yarrowia lipolytica (strain CLIB 122 / E 150) (Yeast).